The sequence spans 330 residues: Ketol-acid reductoisomerase (NADP(+)) (330 aa).

One can recognise a KARI N-terminal Rossmann domain in the interval 3–184; it reads LPVYYDKDID…GGGRMGVLET (182 aa). Residues 26–29, Ser52, and Ser54 contribute to the NADP(+) site; that span reads YGAQ. His109 is a catalytic residue. Gly135 provides a ligand contact to NADP(+). Residues 185-329 form the KARI C-terminal knotted domain; that stretch reads SFKEECESDL…EILRAPFNHK (145 aa). Mg(2+) contacts are provided by Asp193, Glu197, Glu229, and Glu233. Ser254 lines the substrate pocket.

The protein belongs to the ketol-acid reductoisomerase family. Mg(2+) is required as a cofactor.

It catalyses the reaction (2R)-2,3-dihydroxy-3-methylbutanoate + NADP(+) = (2S)-2-acetolactate + NADPH + H(+). The enzyme catalyses (2R,3R)-2,3-dihydroxy-3-methylpentanoate + NADP(+) = (S)-2-ethyl-2-hydroxy-3-oxobutanoate + NADPH + H(+). The protein operates within amino-acid biosynthesis; L-isoleucine biosynthesis; L-isoleucine from 2-oxobutanoate: step 2/4. It participates in amino-acid biosynthesis; L-valine biosynthesis; L-valine from pyruvate: step 2/4. Involved in the biosynthesis of branched-chain amino acids (BCAA). Catalyzes an alkyl-migration followed by a ketol-acid reduction of (S)-2-acetolactate (S2AL) to yield (R)-2,3-dihydroxy-isovalerate. In the isomerase reaction, S2AL is rearranged via a Mg-dependent methyl migration to produce 3-hydroxy-3-methyl-2-ketobutyrate (HMKB). In the reductase reaction, this 2-ketoacid undergoes a metal-dependent reduction by NADPH to yield (R)-2,3-dihydroxy-isovalerate. The sequence is that of Ketol-acid reductoisomerase (NADP(+)) from Helicobacter pylori (strain Shi470).